A 284-amino-acid chain; its full sequence is MDRIASATFSCPAISLSRVCRISPFGLNIKTNHRKRFSCRVAVASGETSARVVVDNELDLEHKKHDLLRAVQDTQRGLTATSDQRSIIEEALVTVEGFNGGEEIDPVKLDGTWRLQYTSAPDVVVLFEAASRLPFFQVGQVFQKFECRDRSDGGIIRNVVQWSLPSLLEEQEGATLVVTAKFDKVSSRNIYLQFEEISVRNININEQLQALIAPAILPRSFLSLQLLQFIRTFKAQIPVNATSPGRRSVGGLYYLSYLDNNMLLGRSVGGGGVFVFTKSQPLEL.

A chloroplast-targeting transit peptide spans 1-40 (MDRIASATFSCPAISLSRVCRISPFGLNIKTNHRKRFSCR).

This sequence belongs to the PAP/fibrillin family.

The protein resides in the plastid. It is found in the chloroplast. The protein localises to the plastoglobule. This Arabidopsis thaliana (Mouse-ear cress) protein is Probable plastid-lipid-associated protein 10, chloroplastic (PAP10).